We begin with the raw amino-acid sequence, 210 residues long: Outer surface protein C (210 aa).

The first 18 residues, 1 to 18, serve as a signal peptide directing secretion; it reads MKKNTLSAILMTLFLFIS. Cys-19 carries N-palmitoyl cysteine lipidation. The S-diacylglycerol cysteine moiety is linked to residue Cys-19.

The protein belongs to the OspC lipoprotein family. Homodimer. Binds human plasminogen on the bacterial surface, also binds human plasmin. Interacts with tick I.ricinus salivary protein Iric-1. Interacts with human complement C4 beta chain (C4B); whole bacteria bind to wells coated with C4b. Binding is inhibited by human complement factor C2.

The protein resides in the cell outer membrane. The protein localises to the cell surface. Its function is as follows. A major immunodominant protein in mammalian hosts. Required for the initial stages of mammalian infection. Interaction with tick I.ricinus salivary protein Salp15 protects the bacteria from antibody-mediated killing in vitro and in vivo. Inhibits macrophage-mediated phagocytosis of the bacteria. Binds human plasminogen; this probably confers an extracellular protease activity on the bacteria that allows it to traverse tissue. Binds human complement C4-B, which may inhibit the complement cascade. Experiments in mice suggest it may play another role after initial infection. This Borreliella burgdorferi (strain ATCC 35210 / DSM 4680 / CIP 102532 / B31) (Borrelia burgdorferi) protein is Outer surface protein C.